A 148-amino-acid polypeptide reads, in one-letter code: UPF0178 protein Mlg_1612 (148 aa).

This sequence belongs to the UPF0178 family.

The sequence is that of UPF0178 protein Mlg_1612 from Alkalilimnicola ehrlichii (strain ATCC BAA-1101 / DSM 17681 / MLHE-1).